Here is a 323-residue protein sequence, read N- to C-terminus: GDSL esterase/lipase At5g03980 (323 aa).

A signal peptide spans 1–21; sequence MSTTKALSLLVFILFVSLVHS. The active-site Nucleophile is Ser36. A glycan (N-linked (GlcNAc...) asparagine) is linked at Asn77. Catalysis depends on residues Asp294 and His297.

This sequence belongs to the 'GDSL' lipolytic enzyme family.

It localises to the secreted. The protein is GDSL esterase/lipase At5g03980 of Arabidopsis thaliana (Mouse-ear cress).